Here is a 159-residue protein sequence, read N- to C-terminus: Transcription elongation factor GreA (159 aa).

The stretch at 1–76 forms a coiled coil; the sequence is MAEEKEVVLT…SLEKTLKKAR (76 aa).

The protein belongs to the GreA/GreB family.

Necessary for efficient RNA polymerase transcription elongation past template-encoded arresting sites. The arresting sites in DNA have the property of trapping a certain fraction of elongating RNA polymerases that pass through, resulting in locked ternary complexes. Cleavage of the nascent transcript by cleavage factors such as GreA or GreB allows the resumption of elongation from the new 3'terminus. GreA releases sequences of 2 to 3 nucleotides. The sequence is that of Transcription elongation factor GreA from Syntrophomonas wolfei subsp. wolfei (strain DSM 2245B / Goettingen).